The following is a 382-amino-acid chain: Alanine racemase (382 aa).

Lysine 39 acts as the Proton acceptor; specific for D-alanine in catalysis. Residue lysine 39 is modified to N6-(pyridoxal phosphate)lysine. Arginine 138 contacts substrate. Tyrosine 265 functions as the Proton acceptor; specific for L-alanine in the catalytic mechanism. Methionine 312 serves as a coordination point for substrate.

The protein belongs to the alanine racemase family. Pyridoxal 5'-phosphate is required as a cofactor.

It carries out the reaction L-alanine = D-alanine. It functions in the pathway amino-acid biosynthesis; D-alanine biosynthesis; D-alanine from L-alanine: step 1/1. Its function is as follows. Catalyzes the interconversion of L-alanine and D-alanine. May also act on other amino acids. The sequence is that of Alanine racemase (alr) from Staphylococcus epidermidis (strain ATCC 35984 / DSM 28319 / BCRC 17069 / CCUG 31568 / BM 3577 / RP62A).